Reading from the N-terminus, the 842-residue chain is Translation initiation factor IF-2 (842 aa).

2 disordered regions span residues 42-91 (ETKR…NLSS) and 139-253 (LQKQ…NQEP). Composition is skewed to basic and acidic residues over residues 176-190 (IEKR…EERH) and 199-214 (SEIR…DERR). Residues 340–509 (PRPPVVTIMG…LLQAEMLDLK (170 aa)) form the tr-type G domain. The tract at residues 349–356 (GHVDHGKT) is G1. 349-356 (GHVDHGKT) contacts GTP. A G2 region spans residues 374–378 (GITQH). The segment at 395 to 398 (DTPG) is G3. Residues 395 to 399 (DTPGH) and 449 to 452 (NKID) contribute to the GTP site. The tract at residues 449–452 (NKID) is G4. A G5 region spans residues 485–487 (SAK).

Belongs to the TRAFAC class translation factor GTPase superfamily. Classic translation factor GTPase family. IF-2 subfamily.

The protein localises to the cytoplasm. In terms of biological role, one of the essential components for the initiation of protein synthesis. Protects formylmethionyl-tRNA from spontaneous hydrolysis and promotes its binding to the 30S ribosomal subunits. Also involved in the hydrolysis of GTP during the formation of the 70S ribosomal complex. In Bartonella tribocorum (strain CIP 105476 / IBS 506), this protein is Translation initiation factor IF-2.